The sequence spans 392 residues: MAESQIQSYTINFGPQHPAAHGVLRLILEMSGEVVDRADPHVGLLHRGTEKLIEHKTYLQATPYFDRLDYVGTMNQEHAFVLATEKLLGIDIPIRAKFIRTLYDEIGRILNHLLNVTAFIFDVGGMTPLLYGFEEREKLMEFYERVCGARLHANYYRPGGVAADLPAGLLEDIAAWCETFPKVLDDIETLATDNRIFKQRVVDIGVVSPEQALDWGFTGPNLRASGIAWDLRKSQPYDVYDQMEFDIPVGKNGDGYDRYLVRVLEMRESVKIMKQCIAKMPGGPVRVEDNKITPPKRSEMKTSMESLIHHFKLFTEGFKVPAGEVYGAIEAPKGEFAVYLVSDGTGKPYRCKIRPPGYVHLQALDMMSKGHMLADVVANIGSIDIVFGEIDR.

This sequence belongs to the complex I 49 kDa subunit family. In terms of assembly, NDH-1 is composed of 14 different subunits. Subunits NuoB, C, D, E, F, and G constitute the peripheral sector of the complex.

The protein localises to the cell inner membrane. It catalyses the reaction a quinone + NADH + 5 H(+)(in) = a quinol + NAD(+) + 4 H(+)(out). NDH-1 shuttles electrons from NADH, via FMN and iron-sulfur (Fe-S) centers, to quinones in the respiratory chain. The immediate electron acceptor for the enzyme in this species is believed to be ubiquinone. Couples the redox reaction to proton translocation (for every two electrons transferred, four hydrogen ions are translocated across the cytoplasmic membrane), and thus conserves the redox energy in a proton gradient. The sequence is that of NADH-quinone oxidoreductase subunit D from Paramagnetospirillum magneticum (strain ATCC 700264 / AMB-1) (Magnetospirillum magneticum).